A 112-amino-acid polypeptide reads, in one-letter code: Histone H2A, sperm (112 aa).

N5-methylglutamine is present on Q91. K106 participates in a covalent cross-link: Glycyl lysine isopeptide (Lys-Gly) (interchain with G-Cter in ubiquitin).

This sequence belongs to the histone H2A family. As to quaternary structure, the nucleosome is a histone octamer containing two molecules each of H2A, H2B, H3 and H4 assembled in one H3-H4 heterotetramer and two H2A-H2B heterodimers. The octamer wraps approximately 147 bp of DNA. In terms of processing, monoubiquitination gives a specific tag for epigenetic transcriptional repression.

The protein localises to the nucleus. The protein resides in the chromosome. Its function is as follows. Core component of nucleosome. Nucleosomes wrap and compact DNA into chromatin, limiting DNA accessibility to the cellular machineries which require DNA as a template. Histones thereby play a central role in transcription regulation, DNA repair, DNA replication and chromosomal stability. DNA accessibility is regulated via a complex set of post-translational modifications of histones, also called histone code, and nucleosome remodeling. This is Histone H2A, sperm from Lytechinus pictus (Painted sea urchin).